The primary structure comprises 184 residues: Translation initiation factor IF-3 (184 aa).

It belongs to the IF-3 family. Monomer.

Its subcellular location is the cytoplasm. Functionally, IF-3 binds to the 30S ribosomal subunit and shifts the equilibrium between 70S ribosomes and their 50S and 30S subunits in favor of the free subunits, thus enhancing the availability of 30S subunits on which protein synthesis initiation begins. In Mycoplasma genitalium (strain ATCC 33530 / DSM 19775 / NCTC 10195 / G37) (Mycoplasmoides genitalium), this protein is Translation initiation factor IF-3.